The following is a 147-amino-acid chain: Large ribosomal subunit protein bL9 (147 aa).

The protein belongs to the bacterial ribosomal protein bL9 family.

Functionally, binds to the 23S rRNA. The protein is Large ribosomal subunit protein bL9 of Campylobacter lari (strain RM2100 / D67 / ATCC BAA-1060).